A 410-amino-acid polypeptide reads, in one-letter code: Bifunctional malic/malolactic enzyme (410 aa).

Residue Tyr36 is the Proton donor of the active site. The Proton acceptor role is filled by Lys91. Residues Glu133, Asp134, and Asp159 each contribute to the a divalent metal cation site. NADP(+) contacts are provided by residues 192-195 (AGAA), Asn286, and Asn317.

This sequence belongs to the malic enzymes family. In terms of assembly, interacts with BrxC. Requires Mg(2+) as cofactor. Mn(2+) is required as a cofactor.

The enzyme catalyses (S)-malate + NADP(+) = pyruvate + CO2 + NADPH. It carries out the reaction oxaloacetate + H(+) = pyruvate + CO2. It catalyses the reaction (S)-malate + H(+) = (S)-lactate + CO2. With respect to regulation, NADPH is a strong modulator that switches activity from a pyruvate-producing malic enzyme to a lactate-generating malolactic enzyme. Bifunctional enzyme with both malic and malolactic enzyme activities. In the absence of NADPH, catalyzes the reversible decarboxylation of malate to pyruvate. Can use NAD and NADP, but with a very strong preference for NADP. In the presence of excess NADPH, catalyzes the non-oxidative decarboxylation of malate to lactate. During growth on glucose, contributes to NADPH balancing via oxidation of the NADPH produced in excess by other enzymatic reactions. Can also catalyze the decarboxylation of oxaloacetate. The protein is Bifunctional malic/malolactic enzyme (ytsJ) of Bacillus subtilis (strain 168).